Reading from the N-terminus, the 378-residue chain is Ribosomal RNA large subunit methyltransferase G (378 aa).

This sequence belongs to the methyltransferase superfamily. RlmG family.

Its subcellular location is the cytoplasm. The catalysed reaction is guanosine(1835) in 23S rRNA + S-adenosyl-L-methionine = N(2)-methylguanosine(1835) in 23S rRNA + S-adenosyl-L-homocysteine + H(+). Specifically methylates the guanine in position 1835 (m2G1835) of 23S rRNA. The sequence is that of Ribosomal RNA large subunit methyltransferase G from Shigella boydii serotype 4 (strain Sb227).